The sequence spans 149 residues: Transcriptional regulator MraZ (149 aa).

SpoVT-AbrB domains lie at 5–52 (ITTL…PLPE) and 81–124 (AEEC…DSMV).

This sequence belongs to the MraZ family. Forms oligomers.

The protein localises to the cytoplasm. Its subcellular location is the nucleoid. The polypeptide is Transcriptional regulator MraZ (Nitrosococcus oceani (strain ATCC 19707 / BCRC 17464 / JCM 30415 / NCIMB 11848 / C-107)).